The chain runs to 514 residues: ATP synthase subunit alpha (514 aa).

Position 170–177 (170–177) interacts with ATP; the sequence is GDRQIGKT.

Belongs to the ATPase alpha/beta chains family. As to quaternary structure, F-type ATPases have 2 components, CF(1) - the catalytic core - and CF(0) - the membrane proton channel. CF(1) has five subunits: alpha(3), beta(3), gamma(1), delta(1), epsilon(1). CF(0) has three main subunits: a(1), b(2) and c(9-12). The alpha and beta chains form an alternating ring which encloses part of the gamma chain. CF(1) is attached to CF(0) by a central stalk formed by the gamma and epsilon chains, while a peripheral stalk is formed by the delta and b chains.

It is found in the cell inner membrane. It carries out the reaction ATP + H2O + 4 H(+)(in) = ADP + phosphate + 5 H(+)(out). Its function is as follows. Produces ATP from ADP in the presence of a proton gradient across the membrane. The alpha chain is a regulatory subunit. The polypeptide is ATP synthase subunit alpha (Pseudomonas fluorescens (strain SBW25)).